We begin with the raw amino-acid sequence, 600 residues long: Sulfite reductase [NADPH] flavoprotein alpha-component (600 aa).

In terms of domain architecture, Flavodoxin-like spans 63–201; the sequence is ITLISASQTG…VADQWRKQLT (139 aa). FMN is bound by residues 69-74, 116-119, and 152-161; these read SQTGNA, STQG, and LGDTSYERFC. The FAD-binding FR-type domain occupies 235–449; sequence QAPLTAALAT…IEHNDNFRLP (215 aa). FAD contacts are provided by residues T323, H357, 387–390, 405–407, Y411, and 420–423; these read RLYS, TVG, and GGAS. Residues 520 to 521, 526 to 530, and D562 each bind NADP(+); these read SR and KIYVQ. Y600 contributes to the FAD binding site.

This sequence belongs to the NADPH-dependent sulphite reductase flavoprotein subunit CysJ family. The protein in the N-terminal section; belongs to the flavodoxin family. In the C-terminal section; belongs to the flavoprotein pyridine nucleotide cytochrome reductase family. Alpha(8)-beta(8). The alpha component is a flavoprotein, the beta component is a hemoprotein. The cofactor is FAD. FMN is required as a cofactor.

It catalyses the reaction hydrogen sulfide + 3 NADP(+) + 3 H2O = sulfite + 3 NADPH + 4 H(+). The protein operates within sulfur metabolism; hydrogen sulfide biosynthesis; hydrogen sulfide from sulfite (NADPH route): step 1/1. Its function is as follows. Component of the sulfite reductase complex that catalyzes the 6-electron reduction of sulfite to sulfide. This is one of several activities required for the biosynthesis of L-cysteine from sulfate. The flavoprotein component catalyzes the electron flow from NADPH -&gt; FAD -&gt; FMN to the hemoprotein component. This is Sulfite reductase [NADPH] flavoprotein alpha-component from Photorhabdus laumondii subsp. laumondii (strain DSM 15139 / CIP 105565 / TT01) (Photorhabdus luminescens subsp. laumondii).